A 273-amino-acid polypeptide reads, in one-letter code: Small ribosomal subunit protein uS2 (273 aa).

Positions 244 to 273 (SDEEANSSAEENENRQEDLLAKKYDSSEAN) are disordered. Basic and acidic residues predominate over residues 255-273 (NENRQEDLLAKKYDSSEAN).

This sequence belongs to the universal ribosomal protein uS2 family.

The sequence is that of Small ribosomal subunit protein uS2 from Chlamydia felis (strain Fe/C-56) (Chlamydophila felis).